We begin with the raw amino-acid sequence, 162 residues long: Meiosis-specific protein HED1 (162 aa).

The tract at residues 67–124 (KNLSENTGGGSPNGGAYLDAKKGVREQDQYQGGPSKELDRLQPPPSMKKSPPRKKKSL) is disordered. The segment covering 85 to 94 (DAKKGVREQD) has biased composition (basic and acidic residues).

As to quaternary structure, interacts with RAD51.

The protein localises to the nucleus. It is found in the chromosome. Its function is as follows. Involved in regulation of meiotic recombination and repair of DNA damage. Inhibits RAD51-mediated recombination when the meiotic recombination machinery is impaired. In Saccharomyces cerevisiae (strain ATCC 204508 / S288c) (Baker's yeast), this protein is Meiosis-specific protein HED1 (HED1).